We begin with the raw amino-acid sequence, 248 residues long: 2,3-bisphosphoglycerate-dependent phosphoglycerate mutase (248 aa).

Residues 8–15 (RHGESTWN), 21–22 (TG), Arg60, 87–90 (ERHY), Lys98, 114–115 (RR), and 183–184 (GN) each bind substrate. The active-site Tele-phosphohistidine intermediate is the His9. Glu87 acts as the Proton donor/acceptor in catalysis.

This sequence belongs to the phosphoglycerate mutase family. BPG-dependent PGAM subfamily. In terms of assembly, homodimer.

The enzyme catalyses (2R)-2-phosphoglycerate = (2R)-3-phosphoglycerate. The protein operates within carbohydrate degradation; glycolysis; pyruvate from D-glyceraldehyde 3-phosphate: step 3/5. In terms of biological role, catalyzes the interconversion of 2-phosphoglycerate and 3-phosphoglycerate. This is 2,3-bisphosphoglycerate-dependent phosphoglycerate mutase from Burkholderia cenocepacia (strain ATCC BAA-245 / DSM 16553 / LMG 16656 / NCTC 13227 / J2315 / CF5610) (Burkholderia cepacia (strain J2315)).